We begin with the raw amino-acid sequence, 225 residues long: MASPRWAALARDTNETKVKLALSIDGGDLPPDTHPSLLEAAASGHASQSSSSQKISINTGIGFLDHMLHAFAKHAGFSLLLTCQGDLHIDDHHTAEDVCIALGDAFKTALGSAAGIARFGFAYCPLDEALSRAVVDVSNRPFAVVELGLRREKIGDLSCEMIPHCIMSFATAARLTIHVDCIRGENDHHRAESAFKALAVAVRTAVGKVAGREGEVPSTKGTLSV.

This sequence belongs to the imidazoleglycerol-phosphate dehydratase family.

The enzyme catalyses D-erythro-1-(imidazol-4-yl)glycerol 3-phosphate = 3-(imidazol-4-yl)-2-oxopropyl phosphate + H2O. Its pathway is amino-acid biosynthesis; L-histidine biosynthesis; L-histidine from 5-phospho-alpha-D-ribose 1-diphosphate: step 6/9. This is Imidazoleglycerol-phosphate dehydratase (PTH3) from Pyricularia oryzae (strain 70-15 / ATCC MYA-4617 / FGSC 8958) (Rice blast fungus).